The sequence spans 400 residues: Elongation factor Tu (400 aa).

The 201-residue stretch at 10–210 folds into the tr-type G domain; it reads KPHCNVGTIG…VDSYIPIPPR (201 aa). The segment at 19-26 is G1; that stretch reads GHVDHGKT. Position 19–26 (19–26) interacts with GTP; that stretch reads GHVDHGKT. Mg(2+) is bound at residue Thr26. The segment at 60 to 64 is G2; the sequence is GLTIA. The interval 81–84 is G3; it reads DCPG. GTP is bound by residues 81-85 and 136-139; these read DCPGH and NKCD. Residues 136–139 form a G4 region; it reads NKCD. Residues 174–176 form a G5 region; sequence SAI.

The protein belongs to the TRAFAC class translation factor GTPase superfamily. Classic translation factor GTPase family. EF-Tu/EF-1A subfamily. Monomer.

The protein localises to the cytoplasm. It catalyses the reaction GTP + H2O = GDP + phosphate + H(+). Functionally, GTP hydrolase that promotes the GTP-dependent binding of aminoacyl-tRNA to the A-site of ribosomes during protein biosynthesis. This chain is Elongation factor Tu, found in Dehalococcoides mccartyi (strain ATCC BAA-2266 / KCTC 15142 / 195) (Dehalococcoides ethenogenes (strain 195)).